Here is a 577-residue protein sequence, read N- to C-terminus: Protein downstream neighbor of son homolog (577 aa).

Disordered regions lie at residues 1–67 (MAEL…KRRN) and 328–382 (FTQP…LEEM). The span at 362–375 (ETDEVSDESDEDES) shows a compositional bias: acidic residues.

Belongs to the DONSON family. Component of the replisome complex.

It localises to the nucleus. Functionally, replisome component that maintains genome stability by protecting stalled or damaged replication forks. After the induction of replication stress, required for the stabilization of stalled replication forks, the efficient activation of the intra-S-phase and G/2M cell-cycle checkpoints and the maintenance of genome stability. This is Protein downstream neighbor of son homolog from Xenopus tropicalis (Western clawed frog).